Reading from the N-terminus, the 381-residue chain is Queuine tRNA-ribosyltransferase (381 aa).

Residue Asp-92 is the Proton acceptor of the active site. Substrate contacts are provided by residues 92–96 (DSGGF), Asp-146, Gln-190, and Gly-217. The tract at residues 248–254 (GVGRPED) is RNA binding. Asp-267 serves as the catalytic Nucleophile. The segment at 272–276 (TRNAR) is RNA binding; important for wobble base 34 recognition. Cys-305, Cys-307, Cys-310, and His-337 together coordinate Zn(2+).

It belongs to the queuine tRNA-ribosyltransferase family. As to quaternary structure, homodimer. Within each dimer, one monomer is responsible for RNA recognition and catalysis, while the other monomer binds to the replacement base PreQ1. The cofactor is Zn(2+).

It carries out the reaction 7-aminomethyl-7-carbaguanine + guanosine(34) in tRNA = 7-aminomethyl-7-carbaguanosine(34) in tRNA + guanine. The protein operates within tRNA modification; tRNA-queuosine biosynthesis. In terms of biological role, catalyzes the base-exchange of a guanine (G) residue with the queuine precursor 7-aminomethyl-7-deazaguanine (PreQ1) at position 34 (anticodon wobble position) in tRNAs with GU(N) anticodons (tRNA-Asp, -Asn, -His and -Tyr). Catalysis occurs through a double-displacement mechanism. The nucleophile active site attacks the C1' of nucleotide 34 to detach the guanine base from the RNA, forming a covalent enzyme-RNA intermediate. The proton acceptor active site deprotonates the incoming PreQ1, allowing a nucleophilic attack on the C1' of the ribose to form the product. After dissociation, two additional enzymatic reactions on the tRNA convert PreQ1 to queuine (Q), resulting in the hypermodified nucleoside queuosine (7-(((4,5-cis-dihydroxy-2-cyclopenten-1-yl)amino)methyl)-7-deazaguanosine). This chain is Queuine tRNA-ribosyltransferase, found in Xanthomonas axonopodis pv. citri (strain 306).